The following is a 151-amino-acid chain: MPHRSRHKKGRSRSVRPAHPTVPTWIQYTPDEVEQLVVELARRGFPPSQIGIILRDQYGIPLVKPITGKKLTKILEEHGIRQEIPEDLLNLIKRALRIRKHLEEHPKDMASRRGLQLVESKIHRLIKYYKRVGKLPKEFVYNPEALSHLAT.

Residues 1 to 16 (MPHRSRHKKGRSRSVR) are compositionally biased toward basic residues. Positions 1 to 21 (MPHRSRHKKGRSRSVRPAHPT) are disordered.

It belongs to the universal ribosomal protein uS15 family. In terms of assembly, part of the 30S ribosomal subunit.

This is Small ribosomal subunit protein uS15 from Pyrobaculum islandicum (strain DSM 4184 / JCM 9189 / GEO3).